Reading from the N-terminus, the 293-residue chain is Ribosomal protein L11 methyltransferase (293 aa).

S-adenosyl-L-methionine contacts are provided by Thr145, Gly166, Asp188, and Asn229.

This sequence belongs to the methyltransferase superfamily. PrmA family.

Its subcellular location is the cytoplasm. It carries out the reaction L-lysyl-[protein] + 3 S-adenosyl-L-methionine = N(6),N(6),N(6)-trimethyl-L-lysyl-[protein] + 3 S-adenosyl-L-homocysteine + 3 H(+). In terms of biological role, methylates ribosomal protein L11. The protein is Ribosomal protein L11 methyltransferase of Halorhodospira halophila (strain DSM 244 / SL1) (Ectothiorhodospira halophila (strain DSM 244 / SL1)).